We begin with the raw amino-acid sequence, 150 residues long: Arginine repressor (150 aa).

The protein belongs to the ArgR family.

Its subcellular location is the cytoplasm. It participates in amino-acid biosynthesis; L-arginine biosynthesis [regulation]. Functionally, regulates arginine biosynthesis genes. The polypeptide is Arginine repressor (Staphylococcus carnosus (strain TM300)).